The primary structure comprises 967 residues: Serine/threonine-protein kinase/endoribonuclease ire-1 (967 aa).

The first 21 residues, 1 to 21, serve as a signal peptide directing secretion; that stretch reads MRATFHLFTFIFLLLFSSVIC. The Lumenal segment spans residues 22–438; sequence ISTPGFRNDH…LLLLNNHPIP (417 aa). Residues Asn-100 and Asn-188 are each glycosylated (N-linked (GlcNAc...) asparagine). The helical transmembrane segment at 439–455 threads the bilayer; that stretch reads FYATLVTMFALLLTVIW. Topologically, residues 456 to 967 are cytoplasmic; it reads QCGRQWDQQK…IKKKSNPNTD (512 aa). Residues 474 to 494 are disordered; it reads EIVNNPGESRSAQTSKQSNRG. The span at 479 to 494 shows a compositional bias: polar residues; the sequence is PGESRSAQTSKQSNRG. The 261-residue stretch at 518–778 folds into the Protein kinase domain; that stretch reads YSPSDILGTG…ADAVLNHPFF (261 aa). ATP contacts are provided by residues 524 to 532 and Lys-546; that span reads LGTGCEGTV. Asp-636 functions as the Proton acceptor in the catalytic mechanism. Position 672 is a phosphoserine; by autocatalysis (Ser-672). Residues 781–909 enclose the KEN domain; sequence SEKRLAYFSD…EAVFKRYYSD (129 aa). Positions 948-967 are disordered; that stretch reads RTPLKLDKRNIKKKSNPNTD. Positions 957-967 are enriched in basic residues; the sequence is NIKKKSNPNTD.

The protein belongs to the protein kinase superfamily. Ser/Thr protein kinase family. Mg(2+) serves as cofactor. Post-translationally, autophosphorylated mainly on serine residues.

The protein localises to the endoplasmic reticulum membrane. The enzyme catalyses L-seryl-[protein] + ATP = O-phospho-L-seryl-[protein] + ADP + H(+). The catalysed reaction is L-threonyl-[protein] + ATP = O-phospho-L-threonyl-[protein] + ADP + H(+). With respect to regulation, the kinase domain is activated by trans-autophosphorylation. Kinase activity is required for activation of the endoribonuclease domain. Senses unfolded proteins in the lumen of the endoplasmic reticulum via its N-terminal domain which leads to enzyme auto-activation. The active endoribonuclease domain splices xbp-1 precursor mRNA to produce the mature form which then induces transcription of UPR target genes. Unfolded protein response (UPR) transcriptional activation by ire-1, as well as translational attenuation by pek-1 in a complementary pathway, maintains ER homeostasis. Regulates the transcriptional up-regulation of nucleoside-diphosphatase apy-1 and many other genes, upon ER stress. By activating the UPR pathway during non-lethal hypoxia pre-conditioning, confers adaptive protection to subsequent exposure to hypoxia. ire-1 and pek-1 are redundant genes that control a pathway essential for larval development and survival. Plays a role in the nuclear retention of unspliced mRNAs. The sequence is that of Serine/threonine-protein kinase/endoribonuclease ire-1 from Caenorhabditis elegans.